Consider the following 204-residue polypeptide: 3-isopropylmalate dehydratase small subunit (204 aa).

The protein belongs to the LeuD family. LeuD type 1 subfamily. As to quaternary structure, heterodimer of LeuC and LeuD.

The enzyme catalyses (2R,3S)-3-isopropylmalate = (2S)-2-isopropylmalate. It participates in amino-acid biosynthesis; L-leucine biosynthesis; L-leucine from 3-methyl-2-oxobutanoate: step 2/4. Its function is as follows. Catalyzes the isomerization between 2-isopropylmalate and 3-isopropylmalate, via the formation of 2-isopropylmaleate. The sequence is that of 3-isopropylmalate dehydratase small subunit from Roseiflexus sp. (strain RS-1).